The sequence spans 35 residues: Photosystem II reaction center protein M (35 aa).

The chain crosses the membrane as a helical span at residues 5–25 (ILAVIATALFIIIPTSFLLIL).

It belongs to the PsbM family. In terms of assembly, PSII is composed of 1 copy each of membrane proteins PsbA, PsbB, PsbC, PsbD, PsbE, PsbF, PsbH, PsbI, PsbJ, PsbK, PsbL, PsbM, PsbT, PsbX, PsbY, PsbZ, Psb30/Ycf12, at least 3 peripheral proteins of the oxygen-evolving complex and a large number of cofactors. It forms dimeric complexes.

The protein localises to the plastid. It localises to the chloroplast thylakoid membrane. Functionally, one of the components of the core complex of photosystem II (PSII). PSII is a light-driven water:plastoquinone oxidoreductase that uses light energy to abstract electrons from H(2)O, generating O(2) and a proton gradient subsequently used for ATP formation. It consists of a core antenna complex that captures photons, and an electron transfer chain that converts photonic excitation into a charge separation. This subunit is found at the monomer-monomer interface. The protein is Photosystem II reaction center protein M of Staurastrum punctulatum (Green alga).